The sequence spans 162 residues: MNTRALVRLCLVSTIIIALDQATKALVATTLVLHESIPVIHGFFNLTHIMNPGGAFGLFAGHSPEVRKFFFLFVSSLVALMILWLYQRTAQTHRVLSFGLAAIFAGAVGNLIDRFRFGMVVDFLDFYLGAYHWPAFNVADSAITIGMVVFVYHVIFNKVPDL.

4 consecutive transmembrane segments (helical) span residues 9–29 (LCLV…LVAT), 39–59 (VIHG…FGLF), 66–86 (VRKF…LWLY), and 95–115 (VLSF…IDRF). Active-site residues include Asp122 and Asp140. Residues 136 to 156 (FNVADSAITIGMVVFVYHVIF) traverse the membrane as a helical segment.

The protein belongs to the peptidase A8 family.

It is found in the cell inner membrane. It carries out the reaction Release of signal peptides from bacterial membrane prolipoproteins. Hydrolyzes -Xaa-Yaa-Zaa-|-(S,diacylglyceryl)Cys-, in which Xaa is hydrophobic (preferably Leu), and Yaa (Ala or Ser) and Zaa (Gly or Ala) have small, neutral side chains.. Its pathway is protein modification; lipoprotein biosynthesis (signal peptide cleavage). In terms of biological role, this protein specifically catalyzes the removal of signal peptides from prolipoproteins. The chain is Lipoprotein signal peptidase from Desulforapulum autotrophicum (strain ATCC 43914 / DSM 3382 / VKM B-1955 / HRM2) (Desulfobacterium autotrophicum).